Here is a 101-residue protein sequence, read N- to C-terminus: Small ribosomal subunit protein uS14A (101 aa).

The protein belongs to the universal ribosomal protein uS14 family. As to quaternary structure, part of the 30S ribosomal subunit. Contacts proteins S3 and S10.

In terms of biological role, binds 16S rRNA, required for the assembly of 30S particles and may also be responsible for determining the conformation of the 16S rRNA at the A site. This chain is Small ribosomal subunit protein uS14A, found in Salinispora arenicola (strain CNS-205).